Here is a 328-residue protein sequence, read N- to C-terminus: Phenylalanine--tRNA ligase alpha subunit (328 aa).

A Mg(2+)-binding site is contributed by Glu-253.

It belongs to the class-II aminoacyl-tRNA synthetase family. Phe-tRNA synthetase alpha subunit type 1 subfamily. In terms of assembly, tetramer of two alpha and two beta subunits. Mg(2+) is required as a cofactor.

The protein localises to the cytoplasm. The enzyme catalyses tRNA(Phe) + L-phenylalanine + ATP = L-phenylalanyl-tRNA(Phe) + AMP + diphosphate + H(+). The sequence is that of Phenylalanine--tRNA ligase alpha subunit from Chromobacterium violaceum (strain ATCC 12472 / DSM 30191 / JCM 1249 / CCUG 213 / NBRC 12614 / NCIMB 9131 / NCTC 9757 / MK).